The primary structure comprises 443 residues: Ribulose bisphosphate carboxylase large chain (443 aa).

Substrate-binding residues include Asn89 and Thr139. Lys141 serves as the catalytic Proton acceptor. A substrate-binding site is contributed by Lys143. Mg(2+) contacts are provided by Lys167, Asp169, and Glu170. N6-carboxylysine is present on Lys167. His260 functions as the Proton acceptor in the catalytic mechanism. The substrate site is built by Arg261, His293, and Ser345.

It belongs to the RuBisCO large chain family. Type I subfamily. Heterohexadecamer of 8 large chains and 8 small chains; disulfide-linked. The disulfide link is formed within the large subunit homodimers. Requires Mg(2+) as cofactor. The disulfide bond which can form in the large chain dimeric partners within the hexadecamer appears to be associated with oxidative stress and protein turnover.

The protein localises to the plastid. It localises to the chloroplast. The enzyme catalyses 2 (2R)-3-phosphoglycerate + 2 H(+) = D-ribulose 1,5-bisphosphate + CO2 + H2O. It catalyses the reaction D-ribulose 1,5-bisphosphate + O2 = 2-phosphoglycolate + (2R)-3-phosphoglycerate + 2 H(+). Its function is as follows. RuBisCO catalyzes two reactions: the carboxylation of D-ribulose 1,5-bisphosphate, the primary event in carbon dioxide fixation, as well as the oxidative fragmentation of the pentose substrate in the photorespiration process. Both reactions occur simultaneously and in competition at the same active site. The sequence is that of Ribulose bisphosphate carboxylase large chain from Sesamum indicum (Oriental sesame).